The chain runs to 346 residues: Protein RecA (346 aa).

67 to 74 is a binding site for ATP; that stretch reads GPESSGKT.

The protein belongs to the RecA family.

It is found in the cytoplasm. In terms of biological role, can catalyze the hydrolysis of ATP in the presence of single-stranded DNA, the ATP-dependent uptake of single-stranded DNA by duplex DNA, and the ATP-dependent hybridization of homologous single-stranded DNAs. It interacts with LexA causing its activation and leading to its autocatalytic cleavage. The sequence is that of Protein RecA from Mycobacterium marinum (strain ATCC BAA-535 / M).